We begin with the raw amino-acid sequence, 165 residues long: Lipoprotein signal peptidase (165 aa).

4 helical membrane-spanning segments follow: residues 11-31 (YWVLALAAIVLDQWSKWAVLS), 41-61 (VIPSFFDLTLVYNPGAAFSFL), 64-84 (QGGWQKYFFLVLAVAVSAYLV), and 92-112 (FATLGKTGAAMIIGGALGNVI). Active-site residues include D122 and D140. Residues 132 to 152 (FYPAFNIADSFICVGAVLAVL) form a helical membrane-spanning segment.

This sequence belongs to the peptidase A8 family.

It is found in the cell inner membrane. It catalyses the reaction Release of signal peptides from bacterial membrane prolipoproteins. Hydrolyzes -Xaa-Yaa-Zaa-|-(S,diacylglyceryl)Cys-, in which Xaa is hydrophobic (preferably Leu), and Yaa (Ala or Ser) and Zaa (Gly or Ala) have small, neutral side chains.. The protein operates within protein modification; lipoprotein biosynthesis (signal peptide cleavage). Its function is as follows. This protein specifically catalyzes the removal of signal peptides from prolipoproteins. The polypeptide is Lipoprotein signal peptidase (Neisseria meningitidis serogroup A / serotype 4A (strain DSM 15465 / Z2491)).